A 339-amino-acid chain; its full sequence is Small ribosomal subunit biogenesis GTPase RsgA (339 aa).

Residues Met-111 to Phe-271 enclose the CP-type G domain. GTP-binding positions include Asn-159–Asp-162 and Gly-213–Ser-221. 4 residues coordinate Zn(2+): Cys-295, Cys-300, His-302, and Cys-308.

The protein belongs to the TRAFAC class YlqF/YawG GTPase family. RsgA subfamily. Monomer. Associates with 30S ribosomal subunit, binds 16S rRNA. Zn(2+) serves as cofactor.

Its subcellular location is the cytoplasm. Functionally, one of several proteins that assist in the late maturation steps of the functional core of the 30S ribosomal subunit. Helps release RbfA from mature subunits. May play a role in the assembly of ribosomal proteins into the subunit. Circularly permuted GTPase that catalyzes slow GTP hydrolysis, GTPase activity is stimulated by the 30S ribosomal subunit. In Pseudomonas aeruginosa (strain ATCC 15692 / DSM 22644 / CIP 104116 / JCM 14847 / LMG 12228 / 1C / PRS 101 / PAO1), this protein is Small ribosomal subunit biogenesis GTPase RsgA.